The chain runs to 440 residues: Phosphatidylcholine-sterol acyltransferase (440 aa).

The signal sequence occupies residues 1–24; that stretch reads MGPPGSPWQWVLLLLGLLLPPAAP. Asn44 is a glycosylation site (N-linked (GlcNAc...) asparagine). Cys74 and Cys98 are joined by a disulfide. A glycan (N-linked (GlcNAc...) asparagine) is linked at Asn108. The active-site Nucleophile is Ser205. Residue Asn296 is glycosylated (N-linked (GlcNAc...) asparagine). The cysteines at positions 337 and 380 are disulfide-linked. Active-site charge relay system residues include Asp369 and His401. The N-linked (GlcNAc...) asparagine glycan is linked to Asn408.

This sequence belongs to the AB hydrolase superfamily. Lipase family. Detected in blood plasma (at protein level). Highly expressed in liver.

The protein localises to the secreted. The enzyme catalyses a sterol + a 1,2-diacyl-sn-glycero-3-phosphocholine = a sterol ester + a 1-acyl-sn-glycero-3-phosphocholine. It carries out the reaction a 1-O-alkyl-2-acetyl-sn-glycero-3-phosphocholine + H2O = a 1-O-alkyl-sn-glycero-3-phosphocholine + acetate + H(+). The catalysed reaction is a 1-hexadecanoyl-2-acyl-sn-glycero-3-phosphocholine + (24S)-hydroxycholesterol = (24S)-24-hydroxycholesterol ester + 1-hexadecanoyl-sn-glycero-3-phosphocholine. It catalyses the reaction (24S)-hydroxycholesterol + 1-hexadecanoyl-2-(9Z,12Z-octadecadienoyl)-sn-glycero-3-phosphocholine = (24S)-hydroxycholesterol 3-linoleoate + 1-hexadecanoyl-sn-glycero-3-phosphocholine. The enzyme catalyses 1-hexadecanoyl-2-(5Z,8Z,11Z,14Z-eicosatetraenoyl)-sn-glycero-3-phosphocholine + cholesterol = cholesteryl (5Z,8Z,11Z,14Z)-eicosatetraenoate + 1-hexadecanoyl-sn-glycero-3-phosphocholine. It carries out the reaction 1-hexadecanoyl-2-(9Z-octadecenoyl)-sn-glycero-3-phosphocholine + cholesterol = cholesteryl (9Z-octadecenoate) + 1-hexadecanoyl-sn-glycero-3-phosphocholine. The catalysed reaction is 1-hexadecanoyl-2-(8Z,11Z,14Z-eicosatrienoyl)-sn-glycero-3-phosphocholine + cholesterol = cholesteryl (8Z,11Z,14Z)-eicosatrienoate + 1-hexadecanoyl-sn-glycero-3-phosphocholine. It catalyses the reaction 1-hexadecanoyl-2-(5Z,8Z,11Z-eicosatrienoyl)-sn-glycero-3-phosphocholine + cholesterol = cholesteryl (5Z,8Z,11Z)-eicosatrienoate + 1-hexadecanoyl-sn-glycero-3-phosphocholine. The enzyme catalyses 1-hexadecanoyl-2-(5Z,8Z,11Z,14Z,17Z-eicosapentaenoyl)-sn-glycero-3-phosphocholine + cholesterol = (5Z,8Z,11Z,14Z,17Z-eicosapentaenoyl)-cholesterol + 1-hexadecanoyl-sn-glycero-3-phosphocholine. It carries out the reaction 1-hexadecanoyl-2-(9Z,12Z-octadecadienoyl)-sn-glycero-3-phosphocholine + cholesterol = cholesteryl (9Z,12Z)-octadecadienoate + 1-hexadecanoyl-sn-glycero-3-phosphocholine. The catalysed reaction is 1-hexadecanoyl-2-(6Z,9Z,12Z-octadecatrienoyl)-sn-glycero-3-phosphocholine + cholesterol = (6Z,9Z,12Z-octadecatrienoyl)-cholesterol + 1-hexadecanoyl-sn-glycero-3-phosphocholine. It catalyses the reaction 1-hexadecanoyl-2-(11Z,14Z,17Z-eicosatrienoyl)-sn-glycero-3-phosphocholine + cholesterol = (11Z,14Z,17Z-eicosatrienoyl)-cholesterol + 1-hexadecanoyl-sn-glycero-3-phosphocholine. The enzyme catalyses 1-hexadecanoyl-2-(9Z,12Z,15Z-octadecatrienoyl)-sn-glycero-3-phosphocholine + cholesterol = (9Z,12Z,15Z-octadecatrienoyl)-cholesterol + 1-hexadecanoyl-sn-glycero-3-phosphocholine. It carries out the reaction 1-hexadecanoyl-2-(9Z,12Z-octadecadienoyl)-sn-glycero-3-phosphocholine + H2O = (9Z,12Z)-octadecadienoate + 1-hexadecanoyl-sn-glycero-3-phosphocholine + H(+). The catalysed reaction is 1-hexadecanoyl-2-(5Z,8Z,11Z,14Z-eicosatetraenoyl)-sn-glycero-3-phosphocholine + H2O = 1-hexadecanoyl-sn-glycero-3-phosphocholine + (5Z,8Z,11Z,14Z)-eicosatetraenoate + H(+). It catalyses the reaction a 1-O-alkyl-2-acetyl-sn-glycero-3-phosphocholine + 1-hexadecanoyl-sn-glycero-3-phosphocholine = 1-hexadecanoyl-2-acetyl-sn-glycero-3-phosphocholine + a 1-O-alkyl-sn-glycero-3-phosphocholine. In terms of biological role, central enzyme in the extracellular metabolism of plasma lipoproteins. Synthesized mainly in the liver and secreted into plasma where it converts cholesterol and phosphatidylcholines (lecithins) to cholesteryl esters and lysophosphatidylcholines on the surface of high and low density lipoproteins (HDLs and LDLs). The cholesterol ester is then transported back to the liver. Also produced in the brain by primary astrocytes, and esterifies free cholesterol on nascent APOE-containing lipoproteins secreted from glia and influences cerebral spinal fluid (CSF) APOE- and APOA1 levels. Together with APOE and the cholesterol transporter ABCA1, plays a key role in the maturation of glial-derived, nascent lipoproteins. Required for remodeling high-density lipoprotein particles into their spherical forms. Has a preference for plasma 16:0-18:2 or 18:O-18:2 phosphatidylcholines. Catalyzes the hydrolysis of 1-O-alkyl-2-acetyl-sn-glycero-3-phosphocholine (platelet-activating factor or PAF) to 1-O-alkyl-sn-glycero-3-phosphocholine (lyso-PAF). Also catalyzes the transfer of the acetate group from PAF to 1-hexadecanoyl-sn-glycero-3-phosphocholine forming lyso-PAF. Catalyzes the esterification of (24S)-hydroxycholesterol (24(S)OH-C), also known as cerebrosterol to produce 24(S)OH-C monoesters. The sequence is that of Phosphatidylcholine-sterol acyltransferase (LCAT) from Oryctolagus cuniculus (Rabbit).